The chain runs to 477 residues: Aspartyl/glutamyl-tRNA(Asn/Gln) amidotransferase subunit B (477 aa).

Belongs to the GatB/GatE family. GatB subfamily. Heterotrimer of A, B and C subunits.

The catalysed reaction is L-glutamyl-tRNA(Gln) + L-glutamine + ATP + H2O = L-glutaminyl-tRNA(Gln) + L-glutamate + ADP + phosphate + H(+). It catalyses the reaction L-aspartyl-tRNA(Asn) + L-glutamine + ATP + H2O = L-asparaginyl-tRNA(Asn) + L-glutamate + ADP + phosphate + 2 H(+). Its function is as follows. Allows the formation of correctly charged Asn-tRNA(Asn) or Gln-tRNA(Gln) through the transamidation of misacylated Asp-tRNA(Asn) or Glu-tRNA(Gln) in organisms which lack either or both of asparaginyl-tRNA or glutaminyl-tRNA synthetases. The reaction takes place in the presence of glutamine and ATP through an activated phospho-Asp-tRNA(Asn) or phospho-Glu-tRNA(Gln). The chain is Aspartyl/glutamyl-tRNA(Asn/Gln) amidotransferase subunit B from Legionella pneumophila (strain Lens).